Here is a 109-residue protein sequence, read N- to C-terminus: GDVEAGKAAFNKCKACHEIGESAKNKVGPELDGLDGRHSGAVEGYAYSPANKASGITWTEAEFKEYIKDPKAKVPGTKMVFAGIKKDSELDNLWAYVSQFDKDGKVKAK.

Positions 13, 16, 17, and 79 each coordinate heme c.

Post-translationally, binds 1 heme c group covalently per subunit.

The protein is Cytochrome c-550 of Nitrobacter winogradskyi (Nitrobacter agilis).